The chain runs to 86 residues: Protein Tat (86 aa).

Positions 1 to 24 (MEPVDPRLEPWKHPGSQPKTACTN) are interaction with human CREBBP. A transactivation region spans residues 1-48 (MEPVDPRLEPWKHPGSQPKTACTNCYCKKCCFHCQVCFITKALGISYG). The Zn(2+) site is built by Cys-22, Cys-25, and Cys-27. Residues 22-37 (CTNCYCKKCCFHCQVC) are cysteine-rich. Residue Lys-28 is modified to N6-acetyllysine; by host PCAF. Zn(2+) contacts are provided by Cys-30, His-33, Cys-34, and Cys-37. A core region spans residues 38–48 (FITKALGISYG). The span at 48 to 59 (GRKKRRQRRRAH) shows a compositional bias: basic residues. The interval 48 to 86 (GRKKRRQRRRAHQNSQTHQASLSKQPTSQPRGDPTGPKE) is disordered. The short motif at 49-57 (RKKRRQRRR) is the Nuclear localization signal, RNA-binding (TAR), and protein transduction element. An interaction with the host capping enzyme RNGTT region spans residues 49–86 (RKKRRQRRRAHQNSQTHQASLSKQPTSQPRGDPTGPKE). An N6-acetyllysine; by host EP300 and GCN5L2 mark is found at Lys-50 and Lys-51. 2 positions are modified to asymmetric dimethylarginine; by host PRMT6: Arg-52 and Arg-53. Positions 60–77 (QNSQTHQASLSKQPTSQP) are enriched in polar residues. Lys-71 participates in a covalent cross-link: Glycyl lysine isopeptide (Lys-Gly) (interchain with G-Cter in ubiquitin). Residues 78–80 (RGD) carry the Cell attachment site motif.

This sequence belongs to the lentiviruses Tat family. Interacts with host CCNT1. Associates with the P-TEFb complex composed at least of Tat, P-TEFb (CDK9 and CCNT1), TAR RNA, RNA Pol II. Recruits the HATs CREBBP, TAF1/TFIID, EP300, PCAF and GCN5L2. Interacts with host KAT5/Tip60; this interaction targets the latter to degradation. Interacts with the host deacetylase SIRT1. Interacts with host capping enzyme RNGTT; this interaction stimulates RNGTT. Binds to host KDR, and to the host integrins ITGAV/ITGB3 and ITGA5/ITGB1. Interacts with host KPNB1/importin beta-1 without previous binding to KPNA1/importin alpha-1. Interacts with EIF2AK2. Interacts with host nucleosome assembly protein NAP1L1; this interaction may be required for the transport of Tat within the nucleus, since the two proteins interact at the nuclear rim. Interacts with host C1QBP/SF2P32; this interaction involves lysine-acetylated Tat. Interacts with the host chemokine receptors CCR2, CCR3 and CXCR4. Interacts with host DPP4/CD26; this interaction may trigger an anti-proliferative effect. Interacts with host LDLR. Interacts with the host extracellular matrix metalloproteinase MMP1. Interacts with host PRMT6; this interaction mediates Tat's methylation. Interacts with, and is ubiquitinated by MDM2/Hdm2. Interacts with host PSMC3 and HTATIP2. Interacts with STAB1; this interaction may overcome SATB1-mediated repression of IL2 and IL2RA (interleukin) in T cells by binding to the same domain than HDAC1. Interacts (when acetylated) with human CDK13, thereby increasing HIV-1 mRNA splicing and promoting the production of the doubly spliced HIV-1 protein Nef. Interacts with host TBP; this interaction modulates the activity of transcriptional pre-initiation complex. Interacts with host RELA. Interacts with host PLSCR1; this interaction negatively regulates Tat transactivation activity by altering its subcellular distribution. In terms of processing, asymmetrical arginine methylation by host PRMT6 seems to diminish the transactivation capacity of Tat and affects the interaction with host CCNT1. Post-translationally, acetylation by EP300, CREBBP, GCN5L2/GCN5 and PCAF regulates the transactivation activity of Tat. EP300-mediated acetylation of Lys-50 promotes dissociation of Tat from the TAR RNA through the competitive binding to PCAF's bromodomain. In addition, the non-acetylated Tat's N-terminus can also interact with PCAF. PCAF-mediated acetylation of Lys-28 enhances Tat's binding to CCNT1. Lys-50 is deacetylated by SIRT1. Polyubiquitination by host MDM2 does not target Tat to degradation, but activates its transactivation function and fosters interaction with CCNT1 and TAR RNA. In terms of processing, phosphorylated by EIF2AK2 on serine and threonine residues adjacent to the basic region important for TAR RNA binding and function. Phosphorylation of Tat by EIF2AK2 is dependent on the prior activation of EIF2AK2 by dsRNA.

Its subcellular location is the host nucleus. The protein localises to the host nucleolus. It is found in the host cytoplasm. It localises to the secreted. Its function is as follows. Transcriptional activator that increases RNA Pol II processivity, thereby increasing the level of full-length viral transcripts. Recognizes a hairpin structure at the 5'-LTR of the nascent viral mRNAs referred to as the transactivation responsive RNA element (TAR) and recruits the cyclin T1-CDK9 complex (P-TEFb complex) that will in turn hyperphosphorylate the RNA polymerase II to allow efficient elongation. The CDK9 component of P-TEFb and other Tat-activated kinases hyperphosphorylate the C-terminus of RNA Pol II that becomes stabilized and much more processive. Other factors such as HTATSF1/Tat-SF1, SUPT5H/SPT5, and HTATIP2 are also important for Tat's function. Besides its effect on RNA Pol II processivity, Tat induces chromatin remodeling of proviral genes by recruiting the histone acetyltransferases (HATs) CREBBP, EP300 and PCAF to the chromatin. This also contributes to the increase in proviral transcription rate, especially when the provirus integrates in transcriptionally silent region of the host genome. To ensure maximal activation of the LTR, Tat mediates nuclear translocation of NF-kappa-B by interacting with host RELA. Through its interaction with host TBP, Tat may also modulate transcription initiation. Tat can reactivate a latently infected cell by penetrating in it and transactivating its LTR promoter. In the cytoplasm, Tat is thought to act as a translational activator of HIV-1 mRNAs. Extracellular circulating Tat can be endocytosed by surrounding uninfected cells via the binding to several surface receptors such as CD26, CXCR4, heparan sulfate proteoglycans (HSPG) or LDLR. Neurons are rarely infected, but they internalize Tat via their LDLR. Through its interaction with nuclear HATs, Tat is potentially able to control the acetylation-dependent cellular gene expression. Modulates the expression of many cellular genes involved in cell survival, proliferation or in coding for cytokines or cytokine receptors. Tat plays a role in T-cell and neurons apoptosis. Tat induced neurotoxicity and apoptosis probably contribute to neuroAIDS. Circulating Tat also acts as a chemokine-like and/or growth factor-like molecule that binds to specific receptors on the surface of the cells, affecting many cellular pathways. In the vascular system, Tat binds to ITGAV/ITGB3 and ITGA5/ITGB1 integrins dimers at the surface of endothelial cells and competes with bFGF for heparin-binding sites, leading to an excess of soluble bFGF. The protein is Protein Tat of Homo sapiens (Human).